Here is a 597-residue protein sequence, read N- to C-terminus: Arginine--tRNA ligase (597 aa).

The short motif at 138–148 is the 'HIGH' region element; sequence ANPTGPMHVGH.

It belongs to the class-I aminoacyl-tRNA synthetase family. In terms of assembly, monomer.

It is found in the cytoplasm. It catalyses the reaction tRNA(Arg) + L-arginine + ATP = L-arginyl-tRNA(Arg) + AMP + diphosphate. The sequence is that of Arginine--tRNA ligase from Nitrobacter hamburgensis (strain DSM 10229 / NCIMB 13809 / X14).